The chain runs to 519 residues: Chloroethene reductive dehalogenase (519 aa).

The segment at residues 1 to 43 (MSKFHKTISRRDFMKGLGLAGAGIGAVAASAPVFHDIDELVSS) is a signal peptide (tat-type signal). 4Fe-4S ferredoxin-type domains follow at residues 388 to 420 (PTPPIDAGMFEFCKTCYICRDVCVSGGVHQEDE) and 435 to 465 (LGYRTDWSGCHNQCGMCQSSCPFTYLGLENA). Residues cysteine 400, cysteine 403, cysteine 406, cysteine 410, cysteine 444, cysteine 448, cysteine 451, and cysteine 455 each coordinate [4Fe-4S] cluster.

Belongs to the PceA family. The cofactor is [4Fe-4S] cluster. Requires corrinoid as cofactor. Predicted to be exported by the Tat system. The position of the signal peptide cleavage has been experimentally proven.

It localises to the cell membrane. The enzyme catalyses chloroethene + AH2 = ethene + chloride + A + H(+). It carries out the reaction (Z)-1,2-dichloroethene + AH2 = chloroethene + chloride + A + H(+). The catalysed reaction is 1,1-dichloroethene + AH2 = chloroethene + chloride + A + H(+). Its function is as follows. Catalyzes the reductive dechlorination of chloroethene (or vinyl chloride, VC) to ethene. Can also reduce all dichloroethene (DCE) isomers, but not tetrachloroethene (PCE) or trichloroethene (TCE), at high rates. Reduced methyl viologen can act as the artificial electron donor. The polypeptide is Chloroethene reductive dehalogenase (Dehalococcoides mccartyi (strain VS)).